The primary structure comprises 143 residues: uncharacterized protein (143 aa).

The protein resides in the mitochondrion. This is an uncharacterized protein from Arabidopsis thaliana (Mouse-ear cress).